Consider the following 1009-residue polypeptide: Probable beta-galactosidase B (1009 aa).

The signal sequence occupies residues M1–A27. Y96 is a substrate binding site. N-linked (GlcNAc...) asparagine glycosylation is present at N106. Positions 141, 142, 143, and 201 each coordinate substrate. E202 acts as the Proton donor in catalysis. Position 271 (Y271) interacts with substrate. C277 and C330 are joined by a disulfide. E314 functions as the Nucleophile in the catalytic mechanism. Y379 contributes to the substrate binding site. 12 N-linked (GlcNAc...) asparagine glycosylation sites follow: N467, N495, N547, N593, N632, N672, N707, N775, N782, N789, N795, and N914.

It belongs to the glycosyl hydrolase 35 family.

The protein resides in the secreted. It carries out the reaction Hydrolysis of terminal non-reducing beta-D-galactose residues in beta-D-galactosides.. Its function is as follows. Cleaves beta-linked terminal galactosyl residues from gangliosides, glycoproteins, and glycosaminoglycans. The polypeptide is Probable beta-galactosidase B (lacB) (Pyrenophora tritici-repentis (strain Pt-1C-BFP) (Wheat tan spot fungus)).